Consider the following 714-residue polypeptide: Hormonally up-regulated neu tumor-associated kinase (714 aa).

Positions 1 to 15 (MPAAAGDGLLGEPAA) are enriched in low complexity. A disordered region spans residues 1-26 (MPAAAGDGLLGEPAAPGGGGGAEDAA). The Protein kinase domain maps to 62-320 (LIGSRKLGEG…IQQALANRWL (259 aa)). ATP contacts are provided by residues 68-76 (LGEGSFAKV) and Lys91. Asp186 serves as the catalytic Proton acceptor. A compositionally biased stretch (basic and acidic residues) spans 437-461 (KKPKEQEKRGDFLHRPFSKKLDKNL). 3 disordered regions span residues 437-471 (KKPK…SGSL), 518-552 (MEFI…HKED), and 590-660 (ARRN…VKSR). The segment covering 599-611 (LSPGLPSGSMSPL) has biased composition (low complexity). Residues 623-635 (AHEDKNSPPKEEG) are compositionally biased toward basic and acidic residues.

The protein belongs to the protein kinase superfamily. CAMK Ser/Thr protein kinase family. SNF1 subfamily.

The catalysed reaction is L-seryl-[protein] + ATP = O-phospho-L-seryl-[protein] + ADP + H(+). The enzyme catalyses L-threonyl-[protein] + ATP = O-phospho-L-threonyl-[protein] + ADP + H(+). The polypeptide is Hormonally up-regulated neu tumor-associated kinase (HUNK) (Pan troglodytes (Chimpanzee)).